The following is a 280-amino-acid chain: Small ribosomal subunit protein uS3 (280 aa).

One can recognise a KH type-2 domain in the interval 38–106; the sequence is IRRLLSTGLE…QVQLNILEVR (69 aa). The tract at residues 215–280 is disordered; that stretch reads AAAAPAGAER…PAAEPQSTES (66 aa). Residues 238-280 show a composition bias toward low complexity; the sequence is SGASGTTATGTEAGRAAASADESTAAGQPAEAAPAAEPQSTES.

It belongs to the universal ribosomal protein uS3 family. Part of the 30S ribosomal subunit. Forms a tight complex with proteins S10 and S14.

Functionally, binds the lower part of the 30S subunit head. Binds mRNA in the 70S ribosome, positioning it for translation. The polypeptide is Small ribosomal subunit protein uS3 (Mycobacterium avium (strain 104)).